The chain runs to 929 residues: uncharacterized protein (929 aa).

Residues 1-257 (MARKGKVNTL…SVLSSDDNDS (257 aa)) form a disordered region. The segment covering 23 to 34 (KQLENKILHSYE) has biased composition (basic and acidic residues). Acidic residues-rich tracts occupy residues 35-50 (EESA…DNDE), 59-75 (SEDD…DEED), 107-117 (LNEEDDSDDSV), 133-144 (DENELVDLDTLL), and 188-220 (SESE…DGEN). Residues Ser-251, Ser-555, and Ser-557 each carry the phosphoserine modification. Residues 602-729 (DEMQAFEDEL…KADKKNHKLK (128 aa)) form a disordered region. Over residues 605–619 (QAFEDELAGVPNEDD) the composition is skewed to acidic residues. The segment covering 670–681 (NKPEMKEGQKKA) has biased composition (basic and acidic residues). Residues 696–711 (ETNPWLQVPDQRTSSA) show a composition bias toward polar residues. Residues 712 to 729 (KKLDKNSSKADKKNHKLK) show a composition bias toward basic and acidic residues. Residues Ser-758, Ser-760, and Ser-764 each carry the phosphoserine modification. Residues 805–820 (KEDWVQEDAPKEEDHS) show a composition bias toward basic and acidic residues. The segment at 805–843 (KEDWVQEDAPKEEDHSLPGWGSWGGVGVKQRKTKPKVKK) is disordered. Residues 833-843 (KQRKTKPKVKK) are compositionally biased toward basic residues.

The protein to yeast YML093w.

The protein resides in the nucleus. It localises to the nucleolus. This is an uncharacterized protein from Schizosaccharomyces pombe (strain 972 / ATCC 24843) (Fission yeast).